Reading from the N-terminus, the 93-residue chain is Small ribosomal subunit protein bS6 (93 aa).

It belongs to the bacterial ribosomal protein bS6 family.

Functionally, binds together with bS18 to 16S ribosomal RNA. The polypeptide is Small ribosomal subunit protein bS6 (Treponema denticola (strain ATCC 35405 / DSM 14222 / CIP 103919 / JCM 8153 / KCTC 15104)).